The sequence spans 232 residues: UPF0177 protein in abiGi 5'region (232 aa).

The next 6 helical transmembrane spans lie at 12-32, 47-67, 86-106, 124-144, 165-185, and 206-226; these read YLSL…ILAY, VVAT…GILI, LLFL…SYTY, SIQI…APIF, IVSC…LIVY, and ILVH…LQVI.

It belongs to the UPF0177 family.

The protein resides in the cell membrane. The function of this protein is currently unknown, but it has been shown that it is not necessary for phage resistance. The protein is UPF0177 protein in abiGi 5'region of Lactococcus lactis subsp. cremoris (Streptococcus cremoris).